Reading from the N-terminus, the 222-residue chain is Uracil-DNA glycosylase (222 aa).

Residue Asp61 is the Proton acceptor of the active site.

The protein belongs to the uracil-DNA glycosylase (UDG) superfamily. UNG family.

It is found in the cytoplasm. It carries out the reaction Hydrolyzes single-stranded DNA or mismatched double-stranded DNA and polynucleotides, releasing free uracil.. Excises uracil residues from the DNA which can arise as a result of misincorporation of dUMP residues by DNA polymerase or due to deamination of cytosine. The sequence is that of Uracil-DNA glycosylase from Actinobacillus succinogenes (strain ATCC 55618 / DSM 22257 / CCUG 43843 / 130Z).